The chain runs to 190 residues: GTP cyclohydrolase 1 (190 aa).

Zn(2+) contacts are provided by Cys75, His78, and Cys146.

This sequence belongs to the GTP cyclohydrolase I family. In terms of assembly, homomer.

It carries out the reaction GTP + H2O = 7,8-dihydroneopterin 3'-triphosphate + formate + H(+). It participates in cofactor biosynthesis; 7,8-dihydroneopterin triphosphate biosynthesis; 7,8-dihydroneopterin triphosphate from GTP: step 1/1. The chain is GTP cyclohydrolase 1 from Campylobacter lari (strain RM2100 / D67 / ATCC BAA-1060).